Consider the following 365-residue polypeptide: MESSLPQVAALDRSTLLKAFDETKTGVKGLIDAGITEIPSIFRAPPATLTSPKPPSSSDFSIPTIDLKGGGTDSITRRSLVEKIGDAAEKWGFFQVINHGIPMDVLEKMIDGIREFHEQDTEVKKGFYSRDPASKMVYSSNFDLFSSPAANWRDTLGCYTAPDPPRPEDLPATCGEMMIEYSKEVMKLGKLLFELLSEALGLNTNHLKDMDCTNSLLLLGHYYPPCPQPDLTLGLTKHSDNSFLTILLQDHIGGLQVLHDQYWVDVPPVPGALVVNVGDLLQLITNDKFISVEHRVLANVAGPRISVACFFSSYLMANPRVYGPIKEILSEENPPNYRDTTITEYAKFYRSKGFDGTSGLLYLKI.

One can recognise a Fe2OG dioxygenase domain in the interval 212–313 (CTNSLLLLGH…RISVACFFSS (102 aa)). Residues histidine 238, aspartate 240, and histidine 294 each coordinate Fe cation.

It belongs to the iron/ascorbate-dependent oxidoreductase family. Requires Fe cation as cofactor.

The protein is 1-aminocyclopropane-1-carboxylate oxidase homolog 1 of Arabidopsis thaliana (Mouse-ear cress).